The primary structure comprises 361 residues: Chorismate synthase (361 aa).

Residues R48 and R54 each coordinate NADP(+). FMN-binding positions include 125-127, 238-239, G278, 293-297, and R319; these read RSS, NA, and KPTSS.

The protein belongs to the chorismate synthase family. Homotetramer. It depends on FMNH2 as a cofactor.

It catalyses the reaction 5-O-(1-carboxyvinyl)-3-phosphoshikimate = chorismate + phosphate. The protein operates within metabolic intermediate biosynthesis; chorismate biosynthesis; chorismate from D-erythrose 4-phosphate and phosphoenolpyruvate: step 7/7. In terms of biological role, catalyzes the anti-1,4-elimination of the C-3 phosphate and the C-6 proR hydrogen from 5-enolpyruvylshikimate-3-phosphate (EPSP) to yield chorismate, which is the branch point compound that serves as the starting substrate for the three terminal pathways of aromatic amino acid biosynthesis. This reaction introduces a second double bond into the aromatic ring system. The polypeptide is Chorismate synthase (Salmonella choleraesuis (strain SC-B67)).